The primary structure comprises 329 residues: DNA-directed RNA polymerase subunit alpha (329 aa).

Residues 1–234 form an alpha N-terminal domain (alpha-NTD) region; it reads MSGSVTEFLK…EQLDAFVELR (234 aa). Positions 248-329 are alpha C-terminal domain (alpha-CTD); the sequence is FDPILLRPVD…WPPESIAEKD (82 aa).

It belongs to the RNA polymerase alpha chain family. Homodimer. The RNAP catalytic core consists of 2 alpha, 1 beta, 1 beta' and 1 omega subunit. When a sigma factor is associated with the core the holoenzyme is formed, which can initiate transcription.

It carries out the reaction RNA(n) + a ribonucleoside 5'-triphosphate = RNA(n+1) + diphosphate. Functionally, DNA-dependent RNA polymerase catalyzes the transcription of DNA into RNA using the four ribonucleoside triphosphates as substrates. This Pseudoalteromonas atlantica (strain T6c / ATCC BAA-1087) protein is DNA-directed RNA polymerase subunit alpha.